Here is a 481-residue protein sequence, read N- to C-terminus: Glutamate--glyoxylate aminotransferase 1 (481 aa).

K291 is modified (N6-(pyridoxal phosphate)lysine). A Peroxisomal targeting signal motif is present at residues 479–481; the sequence is SKM.

The protein belongs to the class-I pyridoxal-phosphate-dependent aminotransferase family. Alanine aminotransferase subfamily. In terms of assembly, homodimer. Pyridoxal 5'-phosphate serves as cofactor. In terms of processing, the N-terminus is blocked. Mostly expressed in leaves, and, to a lower extent, in shoots, stems, flowers, seedlings and green siliques.

The protein localises to the peroxisome. The enzyme catalyses L-alanine + 2-oxoglutarate = pyruvate + L-glutamate. It carries out the reaction glyoxylate + L-alanine = glycine + pyruvate. It catalyses the reaction glycine + 2-oxoglutarate = glyoxylate + L-glutamate. It functions in the pathway amino-acid biosynthesis; glycine biosynthesis; glycine from glyoxylate: step 1/1. Its pathway is photosynthesis; C4 acid pathway. It participates in amino-acid degradation; L-alanine degradation via transaminase pathway; pyruvate from L-alanine: step 1/1. In terms of biological role, catalyzes the glutamate:glyoxylate (GGT or GGAT), alanine:glyoxylate (AGT), alanine:2-oxoglutarate (AKT) and glutamate:pyruvate (GPT) aminotransferase reactions in peroxisomes. Required for abscisic acid (ABA)- and stress-mediated responses in an H(2)O(2)-dependent manner. Functions as a photorespiratory aminotransferase that modulates amino acid content during photorespiration (GGAT activity); promotes serine, glycine and citrulline metabolism in response to light. This Arabidopsis thaliana (Mouse-ear cress) protein is Glutamate--glyoxylate aminotransferase 1 (GGAT1).